Reading from the N-terminus, the 236-residue chain is Adenylate dimethylallyltransferase (236 aa).

Belongs to the isopentenyl transferase family.

The enzyme catalyses dimethylallyl diphosphate + AMP = N(6)-(dimethylallyl)adenosine 5'-phosphate + diphosphate. In terms of biological role, transfers dimethylallyl groups to AMP as part of the biosynthesis of cytokinin phytohormones. The polypeptide is Adenylate dimethylallyltransferase (ipt) (Allorhizobium ampelinum (strain ATCC BAA-846 / DSM 112012 / S4) (Agrobacterium vitis (strain S4))).